The chain runs to 387 residues: Protein TsgA homolog (387 aa).

12 helical membrane passes run 11–31, 47–67, 76–96, 101–121, 134–154, 160–180, 205–225, 243–263, 271–291, 299–319, 331–351, and 358–378; these read WISF…GMIM, NIFT…SWLI, LIFG…STSI, INIF…TFII, LLLT…ISAY, ILWY…FILT, IILL…FISW, VLVS…SFII, MFIF…YSKS, IISL…LASL, LILF…SPIV, and TTLI…CIIF.

This sequence belongs to the major facilitator superfamily. TsgA family.

It localises to the cell membrane. This Buchnera aphidicola subsp. Schizaphis graminum (strain Sg) protein is Protein TsgA homolog.